We begin with the raw amino-acid sequence, 316 residues long: Probable metal transport system membrane protein TC_0342 (316 aa).

Helical transmembrane passes span 1–21 (MFAS…IVFF), 39–59 (IQVI…TFLV), 64–84 (AMYA…ACLF), 94–114 (QNLT…IHFI), 124–144 (ASTA…LVFL), 171–191 (FLVL…FICV), 196–216 (VFAF…MFLL), 226–246 (AVGV…AKLI), 252–272 (EMMG…PALS), and 286–306 (SGLA…TVFV).

Belongs to the ABC-3 integral membrane protein family.

The protein localises to the cell inner membrane. In terms of biological role, part of an ATP-driven transport system TC_0338/TC_0339/TC_0341/TC_0342 for a metal. The sequence is that of Probable metal transport system membrane protein TC_0342 from Chlamydia muridarum (strain MoPn / Nigg).